We begin with the raw amino-acid sequence, 1225 residues long: Mediator of RNA polymerase II transcription subunit 13 (1225 aa).

This sequence belongs to the Mediator complex subunit 13 family. As to quaternary structure, component of the srb8-11 complex which consists of rb8, srb9(TRAP240), srb10 and srb11. The srb8-11 complex associates with the Mediator complex thereby blocking association with RNA polymerase II and leading to reduced transcriptional activation by Mediator.

It localises to the nucleus. Functionally, component of the srb8-11 complex. The srb8-11 complex is a regulatory module of the Mediator complex which is itself involved in regulation of basal and activated RNA polymerase II-dependent transcription. The srb8-11 complex may be involved in the transcriptional repression of a subset of genes regulated by Mediator. It may inhibit the association of the Mediator complex with RNA polymerase II to form the holoenzyme complex. The protein is Mediator of RNA polymerase II transcription subunit 13 (srb9) of Schizosaccharomyces pombe (strain 972 / ATCC 24843) (Fission yeast).